The chain runs to 305 residues: Heme A synthase (305 aa).

The Cytoplasmic segment spans residues 1 to 6; sequence MKKFLK. The helical transmembrane segment at 7-27 threads the bilayer; sequence VWSVLTIICMTVVVFGGALVT. Topologically, residues 28 to 63 are extracellular; it reads KTGSADGCGNSWPLCNGQLVRLTDVTPEKLIEFMHR. The cysteines at positions 35 and 42 are disulfide-linked. Glu-59 is an active-site residue. Residue His-62 participates in heme o binding. The helical transmembrane segment at 64–84 threads the bilayer; it reads MTTGISSIFVIVLAICAWIYM. Residues 85–92 lie on the Cytoplasmic side of the membrane; sequence KNRRETKP. Residues 93–113 traverse the membrane as a helical segment; the sequence is LAIIAVLFLIIQALMGMAAVV. Over 114–122 the chain is Extracellular; the sequence is WGQNPYIMA. The helical transmembrane segment at 123–143 threads the bilayer; it reads LHFGISIICYASIVLLALMIF. His-124 contributes to the heme o binding site. Residues 144–160 are Cytoplasmic-facing; the sequence is EVDRKFDARNLVMGTKL. A helical transmembrane segment spans residues 161-181; the sequence is RVNIYALTIYTYLAVYTGALV. The Extracellular portion of the chain corresponds to 182–212; the sequence is RHEKASMAVPVWPFENGHFIMPTSVQDYVQY. Residues 213–233 form a helical membrane-spanning segment; it reads FHRLAAFILIVWLLYVTWLVF. His-214 serves as a coordination point for heme b. Topologically, residues 234–240 are cytoplasmic; sequence RDYRRYR. A helical transmembrane segment spans residues 241–261; sequence VLTFSMVLSLVFIALQAVTGA. Residues 262-271 are Extracellular-facing; that stretch reads LSVYTGVNLY. Residues 272-292 traverse the membrane as a helical segment; the sequence is IALAHSLIITMLFALLCYLCL. His-276 lines the heme b pocket. Residues 293 to 305 lie on the Cytoplasmic side of the membrane; that stretch reads LASRSKSNRLRIK.

This sequence belongs to the COX15/CtaA family. Type 1 subfamily. In terms of assembly, interacts with CtaB. The cofactor is heme b.

The protein resides in the cell membrane. It catalyses the reaction Fe(II)-heme o + 2 A + H2O = Fe(II)-heme a + 2 AH2. The protein operates within porphyrin-containing compound metabolism; heme A biosynthesis; heme A from heme O: step 1/1. In terms of biological role, catalyzes the conversion of heme O to heme A by two successive hydroxylations of the methyl group at C8. The first hydroxylation forms heme I, the second hydroxylation results in an unstable dihydroxymethyl group, which spontaneously dehydrates, resulting in the formyl group of heme A. The polypeptide is Heme A synthase (Listeria monocytogenes serovar 1/2a (strain ATCC BAA-679 / EGD-e)).